Here is a 229-residue protein sequence, read N- to C-terminus: PKHD-type hydroxylase BRADO4652 (229 aa).

The Fe2OG dioxygenase domain maps to 78–180 (QIFPPLFNRY…RVASFFWMQS (103 aa)). Residues His-98, Asp-100, and His-161 each contribute to the Fe cation site. Arg-171 provides a ligand contact to 2-oxoglutarate.

It depends on Fe(2+) as a cofactor. L-ascorbate serves as cofactor.

This is PKHD-type hydroxylase BRADO4652 from Bradyrhizobium sp. (strain ORS 278).